We begin with the raw amino-acid sequence, 171 residues long: MVLMIIKGIFRRYEKWNPVHPTYGAFWGMGIGIGCGVGWGPGFGPEVIGYVGAGCGVGFSVGITLAGLGIGLPTNFLLAAPYNTVEATRKGAFNFFGKNLSTNGWSDLMPQIAGLQRQVSEICSGFNKKPHLNNAIDLKSFPLFISHDCGKFGSHLLHVRKGSEDNKSSAM.

The chain is Cadmium-induced protein AS8 from Arabidopsis thaliana (Mouse-ear cress).